Reading from the N-terminus, the 342-residue chain is Biotin synthase (342 aa).

Residues 55-274 (NAVQCNQLLN…IALARIMMPK (220 aa)) form the Radical SAM core domain. [4Fe-4S] cluster is bound by residues Cys-70, Cys-74, and Cys-77. 4 residues coordinate [2Fe-2S] cluster: Cys-114, Cys-145, Cys-205, and Arg-278.

It belongs to the radical SAM superfamily. Biotin synthase family. As to quaternary structure, homodimer. [4Fe-4S] cluster is required as a cofactor. [2Fe-2S] cluster serves as cofactor.

It catalyses the reaction (4R,5S)-dethiobiotin + (sulfur carrier)-SH + 2 reduced [2Fe-2S]-[ferredoxin] + 2 S-adenosyl-L-methionine = (sulfur carrier)-H + biotin + 2 5'-deoxyadenosine + 2 L-methionine + 2 oxidized [2Fe-2S]-[ferredoxin]. The protein operates within cofactor biosynthesis; biotin biosynthesis; biotin from 7,8-diaminononanoate: step 2/2. Its function is as follows. Catalyzes the conversion of dethiobiotin (DTB) to biotin by the insertion of a sulfur atom into dethiobiotin via a radical-based mechanism. The sequence is that of Biotin synthase from Rhodopseudomonas palustris (strain BisB5).